Consider the following 788-residue polypeptide: Integrin beta-6 (788 aa).

Residues 1–21 (MGIELLCLFFLFLGRNDHVQG) form the signal peptide. The region spanning 22-71 (GCALGGAETCEDCLLIGPQCAWCAQENFTHPSGVGERCDTPANLLAKGCQ) is the PSI domain. At 22 to 709 (GCALGGAETC…KDCPKPPNIP (688 aa)) the chain is on the extracellular side. Disulfide bonds link Cys23/Cys41, Cys31/Cys454, Cys34/Cys59, Cys44/Cys70, Cys197/Cys204, Cys252/Cys293, Cys394/Cys406, Cys426/Cys452, Cys456/Cys476, Cys467/Cys479, Cys481/Cys490, Cys492/Cys519, Cys502/Cys517, Cys511/Cys522, Cys524/Cys537, Cys539/Cys560, Cys544/Cys558, Cys552/Cys563, and Cys565/Cys574. N-linked (GlcNAc...) asparagine glycosylation is found at Asn48 and Asn97. The region spanning 131–371 (YPVDLYYLMD…QLIISAYEEL (241 aa)) is the VWFA domain. Asp140, Ser142, and Ser144 together coordinate Mg(2+). Positions 144, 147, 148, and 179 each coordinate Ca(2+). Asn235, Asp237, Pro239, and Glu240 together coordinate Ca(2+). Glu240 lines the Mg(2+) pocket. Asn260 is a glycosylation site (N-linked (GlcNAc...) asparagine). Residues Asp271 and Lys355 each contribute to the Ca(2+) site. 2 N-linked (GlcNAc...) asparagine glycosylation sites follow: Asn387 and Asn396. I-EGF domains follow at residues 456–491 (CQKE…PRCE), 492–538 (CGED…PYCQ), 539–575 (CDNF…EYCN), and 576–615 (CTTS…PTCE). Residues Asn463 and Asn471 are each glycosylated (N-linked (GlcNAc...) asparagine). N-linked (GlcNAc...) asparagine glycosylation occurs at Asn541. Asn575 carries N-linked (GlcNAc...) asparagine glycosylation. 9 cysteine pairs are disulfide-bonded: Cys576-Cys599, Cys583-Cys597, Cys591-Cys602, Cys604-Cys614, Cys617-Cys620, Cys624-Cys670, Cys630-Cys649, Cys633-Cys645, and Cys678-Cys702. A helical membrane pass occupies residues 710 to 730 (MIMLGVSLAILLIGVVLLCIW). Positions 731-758 (KLLVSFHDRKEVAKFEAERSKAKWQTGT) are interaction with HAX1. The Cytoplasmic segment spans residues 731–788 (KLLVSFHDRKEVAKFEAERSKAKWQTGTNPLYRGSTSTFKNVTYKHREKQKVDLSTDC).

The protein belongs to the integrin beta chain family. As to quaternary structure, heterodimer of an alpha and a beta subunit. Interacts with FLNB. Interacts with HAX1. ITGAV:ITGB6 interacts with FBN1. ITGAV:ITGB6 interacts with TGFB1. In terms of assembly, (Microbial infection) Integrin ITGAV:ITGB6 interacts with coxsackievirus A9, coxsackievirus B1 capsid proteins. (Microbial infection) Integrin ITGAV:ITGB6 interacts with herpes simplex virus-1/HHV-1 gH:gL proteins.

It is found in the cell membrane. It localises to the cell junction. Its subcellular location is the focal adhesion. Integrin alpha-V:beta-6 (ITGAV:ITGB6) is a receptor for fibronectin and cytotactin. It recognizes the sequence R-G-D in its ligands. Internalization of integrin alpha-V/beta-6 via clathrin-mediated endocytosis promotes carcinoma cell invasion. ITGAV:ITGB6 acts as a receptor for fibrillin-1 (FBN1) and mediates R-G-D-dependent cell adhesion to FBN1. Integrin alpha-V:beta-6 (ITGAV:ITGB6) mediates R-G-D-dependent release of transforming growth factor beta-1 (TGF-beta-1) from regulatory Latency-associated peptide (LAP), thereby playing a key role in TGF-beta-1 activation. In terms of biological role, (Microbial infection) Integrin ITGAV:ITGB6 acts as a receptor for Coxsackievirus A9 and Coxsackievirus B1. Its function is as follows. (Microbial infection) Integrin ITGAV:ITGB6 acts as a receptor for Herpes simplex virus-1/HHV-1. The chain is Integrin beta-6 (ITGB6) from Homo sapiens (Human).